The following is a 306-amino-acid chain: D-alanine--D-alanine ligase (306 aa).

Residues 107–300 enclose the ATP-grasp domain; sequence KAAYRTAGLP…FGQLCAWLVE (194 aa). 134–184 is an ATP binding site; the sequence is IAPPYVVKPNNEGSSVGIYIVHEATNSPPQLSEEMPAQVMVEAYAPGREMT. Mg(2+) is bound by residues Asp251, Glu267, and Asn269.

The protein belongs to the D-alanine--D-alanine ligase family. Mg(2+) is required as a cofactor. It depends on Mn(2+) as a cofactor.

The protein resides in the cytoplasm. The catalysed reaction is 2 D-alanine + ATP = D-alanyl-D-alanine + ADP + phosphate + H(+). It participates in cell wall biogenesis; peptidoglycan biosynthesis. Its function is as follows. Cell wall formation. This Ruegeria sp. (strain TM1040) (Silicibacter sp.) protein is D-alanine--D-alanine ligase.